Here is a 441-residue protein sequence, read N- to C-terminus: Homogentisate 1,2-dioxygenase (441 aa).

Catalysis depends on His-287, which acts as the Proton acceptor. Fe cation-binding residues include His-330 and Glu-336. Tyr-345 and His-366 together coordinate homogentisate. Fe cation is bound at residue His-366.

It belongs to the homogentisate dioxygenase family. Hexamer; dimer of trimers. Fe cation is required as a cofactor.

It catalyses the reaction homogentisate + O2 = 4-maleylacetoacetate + H(+). The protein operates within amino-acid degradation; L-phenylalanine degradation; acetoacetate and fumarate from L-phenylalanine: step 4/6. Involved in the catabolism of homogentisate (2,5-dihydroxyphenylacetate or 2,5-OH-PhAc), a central intermediate in the degradation of phenylalanine and tyrosine. Catalyzes the oxidative ring cleavage of the aromatic ring of homogentisate to yield maleylacetoacetate. The polypeptide is Homogentisate 1,2-dioxygenase (Xanthomonas oryzae pv. oryzae (strain MAFF 311018)).